A 280-amino-acid chain; its full sequence is 3-methyl-2-oxobutanoate hydroxymethyltransferase (280 aa).

Mg(2+) is bound by residues aspartate 49 and aspartate 88. Residues 49 to 50, aspartate 88, and lysine 118 each bind 3-methyl-2-oxobutanoate; that span reads DS. Glutamate 120 provides a ligand contact to Mg(2+). Glutamate 187 serves as the catalytic Proton acceptor.

Belongs to the PanB family. In terms of assembly, homodecamer; pentamer of dimers. Requires Mg(2+) as cofactor.

The protein resides in the cytoplasm. It catalyses the reaction 3-methyl-2-oxobutanoate + (6R)-5,10-methylene-5,6,7,8-tetrahydrofolate + H2O = 2-dehydropantoate + (6S)-5,6,7,8-tetrahydrofolate. Its pathway is cofactor biosynthesis; (R)-pantothenate biosynthesis; (R)-pantoate from 3-methyl-2-oxobutanoate: step 1/2. Its function is as follows. Catalyzes the reversible reaction in which hydroxymethyl group from 5,10-methylenetetrahydrofolate is transferred onto alpha-ketoisovalerate to form ketopantoate. The polypeptide is 3-methyl-2-oxobutanoate hydroxymethyltransferase (Xanthobacter autotrophicus (strain ATCC BAA-1158 / Py2)).